The sequence spans 349 residues: KH domain-containing, RNA-binding, signal transduction-associated protein 2 (349 aa).

The 71-residue stretch at 65-135 folds into the KH domain; the sequence is LIPVKQYPKF…HLSDELHVLI (71 aa). 2 disordered regions span residues 181–263 and 320–349; these read SEES…PPPA and EEWTTTRSSLKAPPPRSARGGYREHPYGRY. The span at 218–231 shows a compositional bias: low complexity; the sequence is RGVLTPRGTTVTRG. Omega-N-methylarginine occurs at positions 230 and 240. Basic and acidic residues predominate over residues 340–349; sequence GYREHPYGRY.

It belongs to the KHDRBS family. In terms of assembly, self-associates to form homooligomers. Interacts with SAFB, SFRS9 and YTHDC1. Found in a complex with KHDRBS1, KHDRBS2 and KHDRBS3. Interacts with RBMX. Interacts with the SH3 domains of FYN and PLCG1. Interacts with the SH2 domains of FYN, GRAP2, PLCG1 and RASA1. Interacts with RBMX. Methylated. In terms of processing, phosphorylated on tyrosine residues by FYN. Tyrosine phosphorylated by PTK6 and SRC. Tyrosine phosphorylated by SRC during mitosis. In terms of tissue distribution, expressed in the cortex, cerebellum, striatum, midbrain, brainstem and thalamus of the brain (at protein level). Expressed in neurons (at protein level). Expressed in brain and testis. Expressed in the dentate gyrus of the hippocampus.

It is found in the nucleus. Functionally, RNA-binding protein that plays a role in the regulation of alternative splicing and influences mRNA splice site selection and exon inclusion. Its phosphorylation by FYN inhibits its ability to regulate splice site selection. Induces an increased concentration-dependent incorporation of exon in CD44 pre-mRNA by direct binding to purine-rich exonic enhancer. May function as an adapter protein for Src kinases during mitosis. Binds both poly(A) and poly(U) homopolymers. Phosphorylation by PTK6 inhibits its RNA-binding ability. The protein is KH domain-containing, RNA-binding, signal transduction-associated protein 2 (Khdrbs2) of Rattus norvegicus (Rat).